The primary structure comprises 284 residues: 2-dehydro-3-deoxyphosphooctonate aldolase (284 aa).

The protein belongs to the KdsA family.

Its subcellular location is the cytoplasm. The enzyme catalyses D-arabinose 5-phosphate + phosphoenolpyruvate + H2O = 3-deoxy-alpha-D-manno-2-octulosonate-8-phosphate + phosphate. Its pathway is carbohydrate biosynthesis; 3-deoxy-D-manno-octulosonate biosynthesis; 3-deoxy-D-manno-octulosonate from D-ribulose 5-phosphate: step 2/3. It functions in the pathway bacterial outer membrane biogenesis; lipopolysaccharide biosynthesis. The polypeptide is 2-dehydro-3-deoxyphosphooctonate aldolase (Haemophilus influenzae (strain 86-028NP)).